We begin with the raw amino-acid sequence, 1494 residues long: B-cell CLL/lymphoma 9-like protein (1494 aa).

Disordered regions lie at residues Met1–Gln236 and Val269–Gln496. Residues Gly20–Pro37 are compositionally biased toward pro residues. 2 positions are modified to phosphoserine: Ser21 and Ser25. The residue at position 36 (Lys36) is an N6-acetyllysine. Composition is skewed to polar residues over residues Thr45 to Leu70 and Asn85 to Asn96. Ser88 carries the post-translational modification Phosphoserine. N6-acetyllysine occurs at positions 108 and 110. 2 stretches are compositionally biased toward basic and acidic residues: residues Glu114–Glu126 and Ser134–Gln153. Residues Ser116 and Ser118 each carry the phosphoserine modification. Lys137 carries the N6-acetyllysine modification. The span at Pro193 to Pro207 shows a compositional bias: polar residues. Composition is skewed to pro residues over residues Lys279–Leu289 and Ser299–Gly322. A necessary for interaction with CTNNB1 region spans residues Pro302 to Arg530. The segment covering Thr348 to Asn360 has biased composition (low complexity). Residues Leu396–Leu418 are compositionally biased toward basic and acidic residues. The residue at position 421 (Ser421) is a Phosphoserine. Position 511 is a phosphothreonine (Thr511). An Asymmetric dimethylarginine modification is found at Arg677. Phosphoserine occurs at positions 747, 810, 912, 923, 935, 939, 944, 972, 984, 988, 994, 1001, 1007, and 1014. Disordered stretches follow at residues Arg905–Ser1082 and Glu1113–Pro1206. The segment covering Pro932 to Gln957 has biased composition (polar residues). The span at Gln974–Lys993 shows a compositional bias: polar residues. Polar residues predominate over residues Gly1016–Asn1035. Residues Pro1046–Ser1059 are compositionally biased toward low complexity. Residues Gly1060–Ser1082 are compositionally biased toward polar residues. Over residues Pro1119–Gly1129 the composition is skewed to pro residues. A compositionally biased stretch (polar residues) spans Gly1133–His1143. A compositionally biased stretch (pro residues) spans His1165–Thr1176. A Glycyl lysine isopeptide (Lys-Gly) (interchain with G-Cter in SUMO2) cross-link involves residue Lys1339.

The protein belongs to the BCL9 family. As to quaternary structure, found in a complex with CDC73; CTNNB1 and PYGO1. Interacts with CTNNB1. As to expression, expressed in kidney, liver, lung, testis, brain, spleen, heart and skeletal muscle. Highly expressed in numerous colorectal tumors compared to corresponding non-cancerous tissues.

It is found in the nucleus. Its function is as follows. Transcriptional regulator that acts as an activator. Promotes beta-catenin transcriptional activity. Plays a role in tumorigenesis. Enhances the neoplastic transforming activity of CTNNB1. The chain is B-cell CLL/lymphoma 9-like protein (Bcl9l) from Mus musculus (Mouse).